The primary structure comprises 295 residues: Glycine N-acyltransferase (295 aa).

Lys-15, Lys-126, and Lys-140 each carry N6-acetyllysine; alternate. Residues Lys-15, Lys-126, and Lys-140 each carry the N6-succinyllysine; alternate modification. Lys-158 bears the N6-acetyllysine mark. An N6-succinyllysine modification is found at Lys-168. Lys-255 is modified (N6-acetyllysine; alternate). Residue Lys-255 is modified to N6-succinyllysine; alternate.

It belongs to the glycine N-acyltransferase family. Detected in liver (at protein level).

It is found in the mitochondrion. It carries out the reaction an acyl-CoA + glycine = an N-acylglycine + CoA + H(+). The enzyme catalyses benzoyl-CoA + glycine = N-benzoylglycine + CoA + H(+). Mitochondrial acyltransferase which transfers an acyl group to the N-terminus of glycine and glutamine, although much less efficiently. Can conjugate a multitude of substrates to form a variety of N-acylglycines, thereby detoxify xenobiotics, such as benzoic acid or salicylic acid, and endogenous organic acids, such as isovaleric acid. The sequence is that of Glycine N-acyltransferase (GLYAT) from Bos taurus (Bovine).